The following is a 127-amino-acid chain: Major sperm protein isoform alpha (127 aa).

Position 2 is an N-acetylalanine (Ala-2). One can recognise an MSP domain in the interval Asp-9 to Asn-126.

Forms filaments 10 nm wide, with a characteristic substructure repeating axially at 9 nm. Sperm.

The protein localises to the cell projection. It is found in the pseudopodium. The protein resides in the cytoplasm. Its subcellular location is the cytoskeleton. In terms of biological role, central component in molecular interactions underlying sperm crawling. Forms an extensive filament system that extends from sperm villipoda, along the leading edge of the pseudopod. This is Major sperm protein isoform alpha from Ascaris suum (Pig roundworm).